A 1165-amino-acid polypeptide reads, in one-letter code: MMFDTLGKRCCPWRLKPSALLFLFVLCVTCVPLSVCGCGSCRLVLSNPSGTFTSPCYPNDYPNTQSCSWTLRAPAGYIIQITFNDFDIEEAPNCIYDSLSLDNGESQTKFCGATAKGLSFNSSVNEMHVSFSSDFSIQKKGFNASYIRVAVSLRNQKVILPQTLDAYQVSVAKSISIPELKAFTLCFEASKVGNEGGDWTAFSYSDESLTQLLSLEKASNGYFLSISGSRCLLNNALPVKDKEDIFTENLEQLCLVWNNSWGSIGINFKKNYETVPCDSTISAVVPGDGTLLLGSDRDEVASLRGSIYNFRLWNFTMDLKALSNLSCSVSGNVIDWHNDFWSISTQALKAEGNLSCGSYLIQLPAAELTNCSELGTLCQDGIMYRISVVIHNDFNHPEVKVQTKVAEWLNSTFQNWNYTVYVVNISFHQKVGEDRMKVKRDIMDDDKRLVLWALLVYNATNNVSLNEEKIKQKLMTNNASLEDGLRLCEVDVNQLGMCSALEDPDGFSWPATLPSVYKQPCPNKPGFFMTRACLSNGTSTFWGPVDTSNCSRQSNEVANEILNQTGDGQNLTSANINSIVEKVKRIVNKEENIDITLGSTLMNIFSNILSSSDSDLLESSTEALKTIDELAFKIDLNSTPHVNIETQNLALGVSSLIPGTNAPSNFSIGLPSNNESYFQMDFGNGQTDPLASVILPPNLLENLSPEDSVLVRRAQFTFFNKTGLFQDVGSQRKVLVSYVMACSIGNITIQNLKDPVQIKIKHTRTQEVHHPICAFWDMNKNKSFGGWNTSGCVAHSDLDAGETICLCSHFTHFGVLMDLPRSASQIDGRNTKVLTFITYIGCGISAIFSAATLLTYVAFEKLRRDYPSKILMNLSSALLFLNLIFLLDGWVTSFGVAGLCTAVAALLHFFLLATFTWMGLEAIHMYIALVKVFNTYIHRYILKFCIIGWGLPALVVSIILVSRRQNEVYGKESYGKDQDDEFCWIQDPVVFYVSCAGYFGVMFFLNVAMFIVVMVQICGRNGKRSNRTLREEVLRNLRSVVSLTFLLGMTWGFAFFAWGPLNIPFMYLFSIFNSLQGLFIFIFHCAMKENVQKQWRRHLCCGRFRLADNSDWSKTATNIIKKSSDNLGKSLSSSSIGSNSTYLTSKSKSSSTTYFKRNSHSDNFS.

An N-terminal signal peptide occupies residues 1 to 30 (MMFDTLGKRCCPWRLKPSALLFLFVLCVTC). Residues 31–832 (VPLSVCGCGS…ASQIDGRNTK (802 aa)) lie on the Extracellular side of the membrane. The cysteines at positions 41 and 67 are disulfide-linked. The CUB domain maps to 41-149 (CRLVLSNPSG…KGFNASYIRV (109 aa)). Positions 89 and 97 each coordinate Ca(2+). C94 and C111 are joined by a disulfide. N-linked (GlcNAc...) asparagine glycosylation occurs at N121. 3 residues coordinate Ca(2+): D134, S136, and I137. Residue N143 is glycosylated (N-linked (GlcNAc...) asparagine). The region spanning 154–356 (RNQKVILPQT…ALKAEGNLSC (203 aa)) is the Pentraxin (PTX) domain. Intrachain disulfides connect C186/C254 and C231/C277. N-linked (GlcNAc...) asparagine glycans are attached at residues N258, N314, N324, N353, N370, N410, N417, N424, N458, N462, and N478. The segment at 446 to 807 (DKRLVLWALL…LDAGETICLC (362 aa)) is mediates interaction with laminin-2. 2 cysteine pairs are disulfide-bonded: C498/C533 and C521/C550. Residues N536, N549, N563, N570, N665, N674, N720, N746, N781, and N788 are each glycosylated (N-linked (GlcNAc...) asparagine). Positions 640 to 823 (PHVNIETQNL…GVLMDLPRSA (184 aa)) constitute a GAIN-B domain. 2 cysteine pairs are disulfide-bonded: C773-C805 and C792-C807. The tract at residues 773–823 (CAFWDMNKNKSFGGWNTSGCVAHSDLDAGETICLCSHFTHFGVLMDLPRSA) is GPS. The stachel stretch occupies residues 812–820 (HFGVLMDLP). The helical transmembrane segment at 833–853 (VLTFITYIGCGISAIFSAATL) threads the bilayer. Residues 854–873 (LTYVAFEKLRRDYPSKILMN) are Cytoplasmic-facing. Residues 874–894 (LSSALLFLNLIFLLDGWVTSF) traverse the membrane as a helical segment. The Extracellular segment spans residues 895 to 899 (GVAGL). The chain crosses the membrane as a helical span at residues 900–920 (CTAVAALLHFFLLATFTWMGL). Residues 921-940 (EAIHMYIALVKVFNTYIHRY) are Cytoplasmic-facing. Residues 941-961 (ILKFCIIGWGLPALVVSIILV) form a helical membrane-spanning segment. Residues 962 to 994 (SRRQNEVYGKESYGKDQDDEFCWIQDPVVFYVS) are Extracellular-facing. Residues 995 to 1015 (CAGYFGVMFFLNVAMFIVVMV) form a helical membrane-spanning segment. At 1016 to 1039 (QICGRNGKRSNRTLREEVLRNLRS) the chain is on the cytoplasmic side. The helical transmembrane segment at 1040–1060 (VVSLTFLLGMTWGFAFFAWGP) threads the bilayer. Residues 1061-1062 (LN) are Extracellular-facing. Residues 1063 to 1083 (IPFMYLFSIFNSLQGLFIFIF) form a helical membrane-spanning segment. N1073 is a 17alpha-hydroxyprogesterone binding site. The Cytoplasmic segment spans residues 1084-1165 (HCAMKENVQK…KRNSHSDNFS (82 aa)). Positions 1126–1154 (NLGKSLSSSSIGSNSTYLTSKSKSSSTTY) are enriched in low complexity. Positions 1126–1165 (NLGKSLSSSSIGSNSTYLTSKSKSSSTTYFKRNSHSDNFS) are disordered. S1135 and S1138 each carry phosphoserine.

Belongs to the G-protein coupled receptor 2 family. Adhesion G-protein coupled receptor (ADGR) subfamily. In terms of assembly, heterodimer of 2 chains generated by proteolytic processing; the large extracellular N-terminal fragment and the membrane-bound C-terminal fragment predominantly remain associated and non-covalently linked. Interacts with Laminin-2; this interaction stabilizes the receptor in an inactive state. Laminin-2 polymerization could facilitate ADGRG6-NTF removal, thereby exposing the tethered agonist to drive myelination. Interacts with PRNP. Interacts with ITGB1. Interacts with LRP1. Post-translationally, proteolytically cleaved into 2 conserved sites: one in the GPS region of the GAIN-B domain (S1 site) and the other in the middle of the extracellular domain (S2 site). The proteolytic cleavage at S1 site generates an extracellular subunit and a seven-transmembrane subunit. Furin is involved in the cleavage of the S2 site generating a soluble fragment. Processing at the GPS region occurred independent of and probably prior to the cleavage at the S2 site. Proteolytic cleavage is required for activation of the receptor. As to expression, expressed at high levels in the heart, somite and otic vesicle during embryogenesis and in adult lung.

The protein localises to the cell membrane. Forms a heterodimer of 2 chains generated by proteolytic processing that remain associated through non-covalent interactions mediated by the GAIN-B domain. In the inactivated receptor, the Stachel sequence (also named stalk) is embedded in the GAIN-B domain, where it adopts a beta-strand conformation. On activation, the Stachel moves into the 7 transmembrane region and adopts a twisted hook-shaped configuration that forms contacts within the receptor, leading to coupling of a G-alpha protein, which activates signaling. The cleaved GAIN-B and N-terminal domains can then dissociate from the rest of the receptor. Adhesion G-protein coupled receptor (aGPCR) for steroid hormones, such as progesterone and 17alpha-hydroxyprogesterone (17OHP). Involved in many biological processes, such as myelination, sprouting angiogenesis, placenta, ear and cartilage development. Ligand binding causes a conformation change that triggers signaling via guanine nucleotide-binding proteins (G proteins) and modulates the activity of downstream effectors, such as adenylate cyclase. ADGRG6 is coupled to G(i) G alpha proteins and mediates inhibition of adenylate cyclase. Also able to couple to G(q) G proteins. Involved in myelination of the peripheral nervous system: required for differentiation of promyelinating Schwann cells and for normal myelination of axons. Also acts as a regulator of body length and bone mass. Acts as a regulator of blood-brain barrier formation in the central nervous system vie its association with LRP1 and ITGB1. The polypeptide is Adhesion G-protein coupled receptor G6 (Mus musculus (Mouse)).